Reading from the N-terminus, the 27-residue chain is Histone H1.3, embryonic (27 aa).

An H15 domain is found at 1 to 27 (HVVAAITALKERGGSSHQALKKYKAAN).

The protein belongs to the histone H1/H5 family.

The protein localises to the nucleus. Its subcellular location is the chromosome. Histones H1 are necessary for the condensation of nucleosome chains into higher-order structures. In Parechinus angulosus (Angulate sea urchin), this protein is Histone H1.3, embryonic.